A 428-amino-acid chain; its full sequence is Probable RNase MJ4 (428 aa).

Residues His-57, His-59, Asp-61, His-62, His-143, Asp-165, and His-397 each coordinate Zn(2+).

It belongs to the metallo-beta-lactamase superfamily. RNA-metabolizing metallo-beta-lactamase-like family. The cofactor is Zn(2+).

Functionally, probably an RNase. The protein is Probable RNase MJ4 of Methanocaldococcus jannaschii (strain ATCC 43067 / DSM 2661 / JAL-1 / JCM 10045 / NBRC 100440) (Methanococcus jannaschii).